Reading from the N-terminus, the 299-residue chain is GTPase Era (299 aa).

The Era-type G domain occupies 4-171 (KSGFVAILGR…IKLLTDNLEE (168 aa)). The G1 stretch occupies residues 12–19 (GRPNVGKS). Residue 12–19 (GRPNVGKS) coordinates GTP. Positions 38–42 (QTTRN) are G2. Residues 59–62 (DTPG) form a G3 region. Residues 59 to 63 (DTPGI) and 121 to 124 (NKID) each bind GTP. The tract at residues 121–124 (NKID) is G4. The G5 stretch occupies residues 150 to 152 (ISA). Positions 202–280 (TQQEVPHSVA…YLETWVKVKK (79 aa)) constitute a KH type-2 domain.

Belongs to the TRAFAC class TrmE-Era-EngA-EngB-Septin-like GTPase superfamily. Era GTPase family. As to quaternary structure, monomer.

It is found in the cytoplasm. It localises to the cell membrane. Functionally, an essential GTPase that binds both GDP and GTP, with rapid nucleotide exchange. Plays a role in 16S rRNA processing and 30S ribosomal subunit biogenesis and possibly also in cell cycle regulation and energy metabolism. This chain is GTPase Era, found in Streptococcus agalactiae serotype III (strain NEM316).